A 148-amino-acid chain; its full sequence is Oleosin 1 (148 aa).

The residue at position 2 (Ala-2) is an N-acetylalanine. Residues 2–28 (ADQHFQQPLHFQGSYGQQQPRSYQVAK) are polar. The hydrophobic stretch occupies residues 29–148 (AATAVTAGGS…HVPSGQQQSS (120 aa)). 2 helical membrane passes run 37–57 (GSLL…LTIA) and 81–101 (GFLT…WIYK).

This sequence belongs to the oleosin family.

It is found in the lipid droplet. The protein localises to the membrane. Functionally, may have a structural role to stabilize the lipid body during desiccation of the seed by preventing coalescence of the oil. Probably interacts with both lipid and phospholipid moieties of lipid bodies. May also provide recognition signals for specific lipase anchorage in lipolysis during seedling growth. The chain is Oleosin 1 (OLE1) from Prunus dulcis (Almond).